We begin with the raw amino-acid sequence, 601 residues long: MLRPWLRQCPRATRSLACPQCHLPRPQTARRALRPLPALSLSHPIRSLQTTTTESPDRIPLRKQLKQDAKAVKARKRQTRENEEASREKWELTVGIEIHAQLNTESKLFSRASTSSTDLPNSNVALFDLAFPGSQPEFQIATLLPALRAALALNCEIQPVSKFDRKHYFYQDQPAGYQITQYYEPFAKNGYVDLFRHDGIAPEDGDTVRIGIKQVQMEQDTAKSQEYPPSTQLLDFNRVSHPLVEIITMPQIHTPATAAACVRKIQSILQSCNAVTTGMELGGLRADVNVSIRQRGDTAGTHQYGGIGGLGQRTEIKNLSSFKAVEDAIIAEKNRQIAVLESGGVVEGETRGWTIGSTETRKLRGKEGEVDYRYMPDPDLPPLYIGADLVAALRTNLPTSSDALIELLAGPEYGLPIEDAKPLVELEDGARLEYYQEVVDLLRALQSDQDPKAQKGLARVAGNWVLXELGGLWAKAEEAWDAARVPAPTLAALIDQLQRKHITGPTAKQVLAMVFAGDERPIPQLLEEENLLLRPLSREEYVTLAEAAISLNPAMVEQIRQKNQLGKLGWFVGQMMRMGEKGRVEAPRADAILRELILDQR.

A mitochondrion-targeting transit peptide spans 1-55; that stretch reads MLRPWLRQCPRATRSLACPQCHLPRPQTARRALRPLPALSLSHPIRSLQTTTTES.

The protein belongs to the GatB/GatE family. GatB subfamily. In terms of assembly, subunit of the heterotrimeric GatCAB amidotransferase (AdT) complex, composed of A, B and C subunits.

The protein localises to the mitochondrion. It carries out the reaction L-glutamyl-tRNA(Gln) + L-glutamine + ATP + H2O = L-glutaminyl-tRNA(Gln) + L-glutamate + ADP + phosphate + H(+). Functionally, allows the formation of correctly charged Gln-tRNA(Gln) through the transamidation of misacylated Glu-tRNA(Gln) in the mitochondria. The reaction takes place in the presence of glutamine and ATP through an activated gamma-phospho-Glu-tRNA(Gln). In Aspergillus niger (strain ATCC MYA-4892 / CBS 513.88 / FGSC A1513), this protein is Glutamyl-tRNA(Gln) amidotransferase subunit B, mitochondrial.